Reading from the N-terminus, the 135-residue chain is Large ribosomal subunit protein uL16c (135 aa).

The segment at 1 to 20 (MLSPKRTRFRKQHRGRMKGK) is disordered.

It belongs to the universal ribosomal protein uL16 family. As to quaternary structure, part of the 50S ribosomal subunit.

The protein resides in the plastid. It is found in the chloroplast. The polypeptide is Large ribosomal subunit protein uL16c (Landoltia punctata (Dotted duckmeat)).